A 1409-amino-acid chain; its full sequence is DNA-directed RNA polymerase subunit beta' (1409 aa).

Zn(2+) is bound by residues C70, C72, C85, and C88. Mg(2+)-binding residues include D458, D460, and D462. Zn(2+) contacts are provided by C813, C887, C894, and C897. Positions 1385–1403 are enriched in low complexity; the sequence is EAAELAGSTSDVSTTADAS. The disordered stretch occupies residues 1385-1409; it reads EAAELAGSTSDVSTTADASEGAASE.

The protein belongs to the RNA polymerase beta' chain family. As to quaternary structure, the RNAP catalytic core consists of 2 alpha, 1 beta, 1 beta' and 1 omega subunit. When a sigma factor is associated with the core the holoenzyme is formed, which can initiate transcription. Requires Mg(2+) as cofactor. Zn(2+) is required as a cofactor.

The enzyme catalyses RNA(n) + a ribonucleoside 5'-triphosphate = RNA(n+1) + diphosphate. Its function is as follows. DNA-dependent RNA polymerase catalyzes the transcription of DNA into RNA using the four ribonucleoside triphosphates as substrates. This chain is DNA-directed RNA polymerase subunit beta', found in Variovorax paradoxus (strain S110).